The sequence spans 167 residues: NAD(P)H-quinone oxidoreductase subunit I, chloroplastic (167 aa).

4Fe-4S ferredoxin-type domains lie at 55–84 (GRIH…VDWK) and 95–124 (LNYS…MTEE). [4Fe-4S] cluster-binding residues include C64, C67, C70, C74, C104, C107, C110, and C114.

This sequence belongs to the complex I 23 kDa subunit family. In terms of assembly, NDH is composed of at least 16 different subunits, 5 of which are encoded in the nucleus. [4Fe-4S] cluster is required as a cofactor.

It localises to the plastid. Its subcellular location is the chloroplast thylakoid membrane. It catalyses the reaction a plastoquinone + NADH + (n+1) H(+)(in) = a plastoquinol + NAD(+) + n H(+)(out). It carries out the reaction a plastoquinone + NADPH + (n+1) H(+)(in) = a plastoquinol + NADP(+) + n H(+)(out). NDH shuttles electrons from NAD(P)H:plastoquinone, via FMN and iron-sulfur (Fe-S) centers, to quinones in the photosynthetic chain and possibly in a chloroplast respiratory chain. The immediate electron acceptor for the enzyme in this species is believed to be plastoquinone. Couples the redox reaction to proton translocation, and thus conserves the redox energy in a proton gradient. This Gossypium barbadense (Sea Island cotton) protein is NAD(P)H-quinone oxidoreductase subunit I, chloroplastic.